The chain runs to 346 residues: Uroporphyrinogen decarboxylase (346 aa).

Substrate contacts are provided by residues 21-25 (RQAGR), D71, Y146, S201, and H316.

This sequence belongs to the uroporphyrinogen decarboxylase family. As to quaternary structure, homodimer.

It is found in the cytoplasm. It catalyses the reaction uroporphyrinogen III + 4 H(+) = coproporphyrinogen III + 4 CO2. It functions in the pathway porphyrin-containing compound metabolism; protoporphyrin-IX biosynthesis; coproporphyrinogen-III from 5-aminolevulinate: step 4/4. Its function is as follows. Catalyzes the decarboxylation of four acetate groups of uroporphyrinogen-III to yield coproporphyrinogen-III. In Rickettsia massiliae (strain Mtu5), this protein is Uroporphyrinogen decarboxylase.